We begin with the raw amino-acid sequence, 57 residues long: Light-harvesting protein B-808/866 alpha chain (57 aa).

Met-1 is modified (N-formylmethionine). Residues 1–10 are Cytoplasmic-facing; sequence MQPRSPVRTN. A helical transmembrane segment spans residues 11–30; the sequence is IVIFTILGFVVALLIHFIVL. Position 26 (His-26) interacts with a bacteriochlorophyll. At 31–57 the chain is on the periplasmic side; sequence SSPEYNWLSNAEGGALLLSAARALFGI.

The protein belongs to the antenna complex alpha subunit family. In terms of assembly, the core complex is formed by different alpha and beta chains, binding bacteriochlorophyll molecules, and arranged most probably in tetrameric structures disposed around the reaction center. The non-pigmented gamma chains may constitute additional components.

It localises to the cell membrane. Its function is as follows. Antenna complexes are light-harvesting systems, which transfer the excitation energy to the reaction centers. This is Light-harvesting protein B-808/866 alpha chain (puf2A) from Chloroflexus aurantiacus (strain ATCC 29366 / DSM 635 / J-10-fl).